An 873-amino-acid chain; its full sequence is MDRAALRAAAMGEKKEGGGGGAAADGGAGAAVSRALQQCGQLQKLIDISIGSLRGLRTKCSVSNDLTQQEIRTLEAKLVKYICKQQQSKLSVTPSDRTAELNSYPRFSDWLYIFNVRPEVVQEIPQELTLDALLEMDEAKAKEMLRRWGASTEECSRLQQALTCLRKVTGLGGEHKMDSGWSSTDARDSSLGPPMDMLSSLGRAGASTQGPRSISVSALPASDSPVPGLSEGLSDSCIPLHTSGRLTPRALHSFITPPTTPQLRRHAKLKPPRTPPPPSRKVFQLLPSFPTLTRSKSHESQLGNRIDDVTPMKFELPHGSPQLVRRDIGLSVTHRFSTKSWLSQVCNVCQKSMIFGVKCKHCRLKCHNKCTKEAPACRITFLPLARLRRTESVPSDINNPVDRAAEPHFGTLPKALTKKEHPPAMNLDSSSNPSSTTSSTPSSPAPFLTSSNPSSATTPPNPSPGQRDSRFSFPDISACSQAAPLSSTADSTRLDDQPKTDVLGVHEAEAEEPEAGKSEAEDDEEDEVDDLPSSRRPWRGPISRKASQTSVYLQEWDIPFEQVELGEPIGQGRWGRVHRGRWHGEVAIRLLEMDGHNQDHLKLFKKEVMNYRQTRHENVVLFMGACMNPPHLAIITSFCKGRTLHSFVRDPKTSLDINKTRQIAQEIIKGMGYLHAKGIVHKDLKSKNVFYDNGKVVITDFGLFGISGVVREERRENQLKLSHDWLCYLAPEIVREMIPGRDEDQLPFSKAADVYAFGTVWYELQARDWPFKHQPAEALIWQIGSGEGVRRVLASVSLGKEVGEILSACWAFDLQERPSFSLLMDMLERLPKLNRRLSHPGHFWKSADINSSKVMPRFERFGLGTLESGNPKM.

Disordered regions lie at residues 1–24, 174–230, and 251–281; these read MDRAALRAAAMGEKKEGGGGGAAA, EHKM…PGLS, and LHSFITPPTTPQLRRHAKLKPPRTPPPPSRK. The interval 1–170 is mediates association with membranes; that stretch reads MDRAALRAAA…ALTCLRKVTG (170 aa). The span at 206-216 shows a compositional bias: polar residues; it reads ASTQGPRSISV. 2 positions are modified to phosphothreonine: Thr256 and Thr260. Ser297 is modified (phosphoserine; by MARK3). Ser320 carries the post-translational modification Phosphoserine. Residues 333 to 377 form a Phorbol-ester/DAG-type zinc finger; it reads THRFSTKSWLSQVCNVCQKSMIFGVKCKHCRLKCHNKCTKEAPAC. Residue His334 coordinates Zn(2+). Residue Ser337 is modified to Phosphoserine. Zn(2+) is bound by residues Cys346, Cys349, Cys359, Cys362, His367, Cys370, and Cys377. Phosphoserine; by MARK3 is present on Ser392. Thr411 is modified (phosphothreonine). Disordered regions lie at residues 416 to 473 and 506 to 544; these read LTKK…RFSF and HEAEAEEPEAGKSEAEDDEEDEVDDLPSSRRPWRGPISR. Low complexity predominate over residues 429-458; the sequence is SSSNPSSTTSSTPSSPAPFLTSSNPSSATT. Residues 506–519 are compositionally biased toward basic and acidic residues; it reads HEAEAEEPEAGKSE. Residue Ser518 is modified to Phosphoserine. Positions 520–530 are enriched in acidic residues; sequence AEDDEEDEVDD. The region spanning 563 to 833 is the Protein kinase domain; it reads VELGEPIGQG…MDMLERLPKL (271 aa). 569–577 is an ATP binding site; that stretch reads IGQGRWGRV. Asp683 (proton acceptor) is an active-site residue. Lys685 and Asp700 together coordinate ATP. The residue at position 838 (Ser838) is a Phosphoserine.

This sequence belongs to the protein kinase superfamily. TKL Ser/Thr protein kinase family. As to quaternary structure, homodimer. Heterodimerizes (via N-terminus) with BRAF (via N-terminus) in a MAP2K1/MEK1 or MAP2K2/MEK2-dependent manner. Interacts with MAP2K1/MEK1 and MAP2K2/MEK2. Binding to MAP2K1/MEK1 releases the intramolecular inhibitory interaction between KSR1 N-terminus and kinase domains which is required for the subsequent RSK1 dimerization with BRAF. Identified in a complex with AKAP13, MAP2K1 and BRAF. Interacts with AKAP13 and BRAF. Interacts with RAF and MAPK/ERK, in a Ras-dependent manner. Interacts with 14-3-3 proteins including YWHAB. Interacts with HSP90AA1/HSP90, YWHAE/14-3-3 and CDC37. The binding of 14-3-3 proteins to phosphorylated KSR1 prevents the membrane localization. Interacts with MARK3/C-TAK1. Interacts with PPP2R1A and PPP2CA. Interacts with VRK2. In terms of processing, phosphorylated on Ser-297 and, to a higher extent, on Ser-392 by MARK3. Dephosphorylated on Ser-392 by PPP2CA. Phosphorylated KSR1 is cytoplasmic and dephosphorylated KSR1 is membrane-associated. Phosphorylated by PKA at Ser-838. Phosphorylation at Ser-838 is required for cAMP-dependent activation of MAPK1 and/or MAPK3. Expressed in brain, spleen and testis. Isoform 1 is highly expressed spleen and weakly in testis, and isoform 2 is highly expressed in brain and weakly in testis.

It localises to the cytoplasm. The protein localises to the membrane. The protein resides in the cell membrane. Its subcellular location is the cell projection. It is found in the ruffle membrane. It localises to the endoplasmic reticulum membrane. The enzyme catalyses L-seryl-[protein] + ATP = O-phospho-L-seryl-[protein] + ADP + H(+). It catalyses the reaction L-threonyl-[protein] + ATP = O-phospho-L-threonyl-[protein] + ADP + H(+). Functionally, part of a multiprotein signaling complex which promotes phosphorylation of Raf family members and activation of downstream MAP kinases. Independently of its kinase activity, acts as MAP2K1/MEK1 and MAP2K2/MEK2-dependent allosteric activator of BRAF; upon binding to MAP2K1/MEK1 or MAP2K2/MEK2, dimerizes with BRAF and promotes BRAF-mediated phosphorylation of MAP2K1/MEK1 and/or MAP2K2/MEK2. Promotes activation of MAPK1 and/or MAPK3, both in response to EGF and to cAMP. Its kinase activity is unsure. Some protein kinase activity has been detected in vitro, however the physiological relevance of this activity is unknown. The chain is Kinase suppressor of Ras 1 (Ksr1) from Mus musculus (Mouse).